We begin with the raw amino-acid sequence, 211 residues long: Imidazole glycerol phosphate synthase subunit HisH (211 aa).

In terms of domain architecture, Glutamine amidotransferase type-1 spans 4 to 211; that stretch reads RVVILDYGSG…QLLANWVATL (208 aa). The Nucleophile role is filled by C82. Active-site residues include H192 and E194.

In terms of assembly, heterodimer of HisH and HisF.

The protein resides in the cytoplasm. It carries out the reaction 5-[(5-phospho-1-deoxy-D-ribulos-1-ylimino)methylamino]-1-(5-phospho-beta-D-ribosyl)imidazole-4-carboxamide + L-glutamine = D-erythro-1-(imidazol-4-yl)glycerol 3-phosphate + 5-amino-1-(5-phospho-beta-D-ribosyl)imidazole-4-carboxamide + L-glutamate + H(+). The catalysed reaction is L-glutamine + H2O = L-glutamate + NH4(+). Its pathway is amino-acid biosynthesis; L-histidine biosynthesis; L-histidine from 5-phospho-alpha-D-ribose 1-diphosphate: step 5/9. IGPS catalyzes the conversion of PRFAR and glutamine to IGP, AICAR and glutamate. The HisH subunit catalyzes the hydrolysis of glutamine to glutamate and ammonia as part of the synthesis of IGP and AICAR. The resulting ammonia molecule is channeled to the active site of HisF. This is Imidazole glycerol phosphate synthase subunit HisH from Thermobifida fusca (strain YX).